Here is a 396-residue protein sequence, read N- to C-terminus: Elongation factor Tu-B (396 aa).

The region spanning 10-206 (KLHVNVGTIG…ALDTFIPDPT (197 aa)) is the tr-type G domain. The interval 19–26 (GHVDHGKT) is G1. 19–26 (GHVDHGKT) lines the GTP pocket. Threonine 26 lines the Mg(2+) pocket. The segment at 60–64 (GITIS) is G2. Residues 81–84 (DCPG) form a G3 region. GTP contacts are provided by residues 81 to 85 (DCPGH) and 136 to 139 (NKAD). The tract at residues 136-139 (NKAD) is G4. Residues 174–176 (SAR) form a G5 region.

The protein belongs to the TRAFAC class translation factor GTPase superfamily. Classic translation factor GTPase family. EF-Tu/EF-1A subfamily. Monomer.

It is found in the cytoplasm. The enzyme catalyses GTP + H2O = GDP + phosphate + H(+). GTP hydrolase that promotes the GTP-dependent binding of aminoacyl-tRNA to the A-site of ribosomes during protein biosynthesis. This Xanthomonas campestris pv. campestris (strain ATCC 33913 / DSM 3586 / NCPPB 528 / LMG 568 / P 25) protein is Elongation factor Tu-B.